Consider the following 40-residue polypeptide: MKITSALVLLFAGVAFAQSADPNTNENKNVIHINSPSAAK.

Positions Met1 to Ala17 are cleaved as a signal peptide.

As to expression, lumen fluid of male accessory glands, becomes seminal fluid.

Its subcellular location is the secreted. Its function is as follows. Transferred from male to female during mating and may affect egglaying and behavior after mating. In Drosophila melanogaster (Fruit fly), this protein is Accessory gland-specific peptide 57Db (Mst57Db).